Here is a 353-residue protein sequence, read N- to C-terminus: Chorismate synthase (353 aa).

2 residues coordinate NADP(+): Arg-48 and Arg-54. FMN is bound by residues 125–127 (RSS), 238–239 (NA), Gly-278, 293–297 (KPTSS), and Arg-319.

It belongs to the chorismate synthase family. As to quaternary structure, homotetramer. Requires FMNH2 as cofactor.

It catalyses the reaction 5-O-(1-carboxyvinyl)-3-phosphoshikimate = chorismate + phosphate. Its pathway is metabolic intermediate biosynthesis; chorismate biosynthesis; chorismate from D-erythrose 4-phosphate and phosphoenolpyruvate: step 7/7. In terms of biological role, catalyzes the anti-1,4-elimination of the C-3 phosphate and the C-6 proR hydrogen from 5-enolpyruvylshikimate-3-phosphate (EPSP) to yield chorismate, which is the branch point compound that serves as the starting substrate for the three terminal pathways of aromatic amino acid biosynthesis. This reaction introduces a second double bond into the aromatic ring system. This chain is Chorismate synthase, found in Bordetella parapertussis (strain 12822 / ATCC BAA-587 / NCTC 13253).